We begin with the raw amino-acid sequence, 408 residues long: LL-diaminopimelate aminotransferase (408 aa).

Positions 15 and 42 each coordinate substrate. Residues Tyr-72, 108–109, Tyr-132, Asn-187, Tyr-218, and 246–248 each bind pyridoxal 5'-phosphate; these read SK and SFS. Lys-109, Tyr-132, and Asn-187 together coordinate substrate. Residue Lys-249 is modified to N6-(pyridoxal phosphate)lysine. Pyridoxal 5'-phosphate contacts are provided by Arg-257 and Asn-292. The substrate site is built by Asn-292 and Arg-388.

This sequence belongs to the class-I pyridoxal-phosphate-dependent aminotransferase family. LL-diaminopimelate aminotransferase subfamily. Homodimer. It depends on pyridoxal 5'-phosphate as a cofactor.

The catalysed reaction is (2S,6S)-2,6-diaminopimelate + 2-oxoglutarate = (S)-2,3,4,5-tetrahydrodipicolinate + L-glutamate + H2O + H(+). It participates in amino-acid biosynthesis; L-lysine biosynthesis via DAP pathway; LL-2,6-diaminopimelate from (S)-tetrahydrodipicolinate (aminotransferase route): step 1/1. Functionally, involved in the synthesis of meso-diaminopimelate (m-DAP or DL-DAP), required for both lysine and peptidoglycan biosynthesis. Catalyzes the direct conversion of tetrahydrodipicolinate to LL-diaminopimelate. The sequence is that of LL-diaminopimelate aminotransferase from Synechococcus sp. (strain CC9311).